The primary structure comprises 29 residues: Galanin (29 aa).

The residue at position 29 (alanine 29) is an Alanine amide.

Belongs to the galanin family.

The protein resides in the secreted. Its function is as follows. Contracts smooth muscle of the gastrointestinal and genitourinary tract, regulates growth hormone release, modulates insulin release, and may be involved in the control of adrenal secretion. This is Galanin (GAL) from Ovis aries (Sheep).